Here is a 353-residue protein sequence, read N- to C-terminus: Cytochrome bc1 complex Rieske iron-sulfur subunit (353 aa).

The interval Met-1–Ala-51 is disordered. The segment covering His-40–Ala-51 has biased composition (basic and acidic residues). 3 helical membrane-spanning segments follow: residues Ala-60–Ile-80, Phe-99–Trp-119, and Leu-164–Leu-184. Positions Lys-246–Glu-336 constitute a Rieske domain. Residues Cys-279, His-281, Cys-298, and His-301 each coordinate [2Fe-2S] cluster. Cys-284 and Cys-300 are disulfide-bonded.

It belongs to the Rieske iron-sulfur protein family. As to quaternary structure, the cytochrome bc1 complex is composed of a cytochrome b (QcrB), the Rieske iron-sulfur protein (QcrA) and a diheme cytochrome c (QcrC) subunit. The cofactor is [2Fe-2S] cluster.

It is found in the cell membrane. In terms of biological role, iron-sulfur subunit of the cytochrome bc1 complex, an essential component of the respiratory electron transport chain required for ATP synthesis. The bc1 complex catalyzes the oxidation of menaquinol and the reduction of cytochrome c in the respiratory chain. The bc1 complex operates through a Q-cycle mechanism that couples electron transfer to generation of the proton gradient that drives ATP synthesis. The chain is Cytochrome bc1 complex Rieske iron-sulfur subunit (qcrA) from Streptomyces coelicolor (strain ATCC BAA-471 / A3(2) / M145).